An 842-amino-acid chain; its full sequence is Elongation factor 2 (842 aa).

A tr-type G domain is found at 17-253 (TNVRNMSVIA…LWGDSYFNPK (237 aa)). GTP is bound by residues 26–33 (AHVDHGKS), 158–161 (NKVD), and 213–215 (SGL). A Diphthamide modification is found at His699.

It belongs to the TRAFAC class translation factor GTPase superfamily. Classic translation factor GTPase family. EF-G/EF-2 subfamily.

Its subcellular location is the cytoplasm. The enzyme catalyses GTP + H2O = GDP + phosphate + H(+). In terms of biological role, catalyzes the GTP-dependent ribosomal translocation step during translation elongation. During this step, the ribosome changes from the pre-translocational (PRE) to the post-translocational (POST) state as the newly formed A-site-bound peptidyl-tRNA and P-site-bound deacylated tRNA move to the P and E sites, respectively. Catalyzes the coordinated movement of the two tRNA molecules, the mRNA and conformational changes in the ribosome. This chain is Elongation factor 2 (EFT1), found in Debaryomyces hansenii (strain ATCC 36239 / CBS 767 / BCRC 21394 / JCM 1990 / NBRC 0083 / IGC 2968) (Yeast).